Here is a 132-residue protein sequence, read N- to C-terminus: Small ribosomal subunit protein uS8 (132 aa).

The protein belongs to the universal ribosomal protein uS8 family. As to quaternary structure, part of the 30S ribosomal subunit. Contacts proteins S5 and S12.

Functionally, one of the primary rRNA binding proteins, it binds directly to 16S rRNA central domain where it helps coordinate assembly of the platform of the 30S subunit. The sequence is that of Small ribosomal subunit protein uS8 from Heliobacterium modesticaldum (strain ATCC 51547 / Ice1).